The following is a 198-amino-acid chain: Ribonuclease 3-like protein 1 (198 aa).

Residues 85–110 (KKLAPKPDEEHTTTTKPISKDDESKT) are compositionally biased toward basic and acidic residues. Residues 85 to 115 (KKLAPKPDEEHTTTTKPISKDDESKTRRGSA) are disordered. Residues 114 to 191 (SAKSVLHEMC…AEGALWYLEH (78 aa)) form the DRBM domain.

The sequence is that of Ribonuclease 3-like protein 1 (RTL1) from Arabidopsis thaliana (Mouse-ear cress).